The primary structure comprises 946 residues: Bifunctional glutamine synthetase adenylyltransferase/adenylyl-removing enzyme (946 aa).

The adenylyl removase stretch occupies residues 1-440 (MKPLSSPLQQ…VFNELIGDDE (440 aa)). The interval 449-946 (SEQWRELWQD…ASWQKWLVEE (498 aa)) is adenylyl transferase.

This sequence belongs to the GlnE family. The cofactor is Mg(2+).

It catalyses the reaction [glutamine synthetase]-O(4)-(5'-adenylyl)-L-tyrosine + phosphate = [glutamine synthetase]-L-tyrosine + ADP. The catalysed reaction is [glutamine synthetase]-L-tyrosine + ATP = [glutamine synthetase]-O(4)-(5'-adenylyl)-L-tyrosine + diphosphate. Its function is as follows. Involved in the regulation of glutamine synthetase GlnA, a key enzyme in the process to assimilate ammonia. When cellular nitrogen levels are high, the C-terminal adenylyl transferase (AT) inactivates GlnA by covalent transfer of an adenylyl group from ATP to specific tyrosine residue of GlnA, thus reducing its activity. Conversely, when nitrogen levels are low, the N-terminal adenylyl removase (AR) activates GlnA by removing the adenylyl group by phosphorolysis, increasing its activity. The regulatory region of GlnE binds the signal transduction protein PII (GlnB) which indicates the nitrogen status of the cell. The protein is Bifunctional glutamine synthetase adenylyltransferase/adenylyl-removing enzyme of Escherichia coli (strain SE11).